The primary structure comprises 76 residues: Lividin-2 (76 aa).

The signal sequence occupies residues 1–22; that stretch reads MFTLKKSLLLLFFLGTISLSLC. Residues 23–41 constitute a propeptide that is removed on maturation; that stretch reads QEERNADEEDGGEVTEEEV. Cysteine 70 and cysteine 76 form a disulfide bridge.

As to expression, expressed by the skin glands.

It localises to the secreted. Its function is as follows. Antimicrobial peptide. The polypeptide is Lividin-2 (Odorrana livida (Green mountain frog)).